The primary structure comprises 153 residues: Ubiquitin-conjugating enzyme E2 13 (153 aa).

Residues 3 to 149 (SLPKRIIKET…AREWTKLYAK (147 aa)) form the UBC core domain. The Glycyl thioester intermediate role is filled by cysteine 87. A Glycyl lysine isopeptide (Lys-Gly) (interchain with G-Cter in ubiquitin) cross-link involves residue lysine 92.

It belongs to the ubiquitin-conjugating enzyme family. Heterodimer with MMS2.

It catalyses the reaction S-ubiquitinyl-[E1 ubiquitin-activating enzyme]-L-cysteine + [E2 ubiquitin-conjugating enzyme]-L-cysteine = [E1 ubiquitin-activating enzyme]-L-cysteine + S-ubiquitinyl-[E2 ubiquitin-conjugating enzyme]-L-cysteine.. The protein operates within protein modification; protein ubiquitination. Functionally, has a role in the DNA error-free postreplication repair (PRR) pathway. The UBC13/MMS2 heterodimer catalyzes the synthesis of non-canonical poly-ubiquitin chains that are linked through 'Lys-63'. The sequence is that of Ubiquitin-conjugating enzyme E2 13 (UBC13) from Saccharomyces cerevisiae (strain ATCC 204508 / S288c) (Baker's yeast).